The primary structure comprises 2109 residues: Nonribosomal peptide synthetase sidE (2109 aa).

Positions leucine 31–isoleucine 512 are adenylation 1. Residues alanine 537–serine 613 form the Carrier 1 domain. Serine 574 is subject to O-(pantetheine 4'-phosphoryl)serine. Residues aspartate 646–isoleucine 908 are condensation 1. An adenylation 2 region spans residues arginine 1058 to alanine 1555. The region spanning proline 1584–serine 1660 is the Carrier 2 domain. Serine 1621 is modified (O-(pantetheine 4'-phosphoryl)serine). The condensation 2 stretch occupies residues tyrosine 1695 to aspartate 1968.

The protein belongs to the NRP synthetase family.

The protein operates within siderophore biosynthesis. Nonribosomal peptide synthetase; part of the siderophore biosynthetic pathway. Aspergillus fumigatus produces four types of siderophores, low-molecular-mass iron chelators, including excreted fusarinine C (FsC) and triacetylfusarinine C (TAFC) for iron uptake and intacellular ferricrocin (FC) for hyphal and hydroxyferricrocin (HFC) for conidial iron distribution and storage. TAFC consists of three N(2)-acetyl-N(5)-anhydromevalonyl-N(5)-hydroxyornithine residues cyclically linked by ester bonds; FC is a cyclic hexapeptide with the structure Gly-Ser-Gly-(N(5)-acetyl-N(5)-hydroxyornithine)x3. The biosynthesis of all four siderophores depends on the hydroxylation of ornithine, catalyzed by the monooxygenase sidA. Subsequently, the pathways for biosynthesis of extra- and intracellular siderophores split. For biosynthesis of extracellular siderophores, the transacylase sidF transfers anhydromevalonyl to N(5)-hydroxyornithine. The required anhydromevalonyl-CoA moiety is derived from mevalonate by CoA ligation and dehydration catalyzed by sidI and sidH respectively. The acetylation of N(5)-hydroxyornithine for FC biosynthesis involves the constitutively expressed sidL. FC is hydroxylated to HFC by an as yet uncharacterized enzyme during conidiation. Assembly of fusarinine C (FsC) and FC is catalyzed by two different nonribosomal peptide synthetases (NRPS), sidD and sidC respectively. Subsequently, sidG catalyzes N2-acetylation of FsC for forming TAFC. Both extra- and intracellular siderophores are crucial for growth during iron limitation and virulence. This is Nonribosomal peptide synthetase sidE from Aspergillus fumigatus (strain ATCC MYA-4609 / CBS 101355 / FGSC A1100 / Af293) (Neosartorya fumigata).